Consider the following 293-residue polypeptide: Deubiquitinase OTUD6B (293 aa).

Residue methionine 1 is modified to N-acetylmethionine. Residues 147-284 enclose the OTU domain; the sequence is LEIKQIPSDG…GEHYNSVTRL (138 aa). The tract at residues 152–158 is cys-loop; the sequence is IPSDGHC. Aspartate 155 is an active-site residue. The active-site Nucleophile is cysteine 158. Positions 219-229 are variable-loop; that stretch reads IVNTAAWGGQL. The interval 267 to 277 is his-loop; it reads YMRHAYGLGEH. Histidine 277 is a catalytic residue.

As to quaternary structure, interacts with the eukaryotic translation initiation factor 4F complex.

The enzyme catalyses Thiol-dependent hydrolysis of ester, thioester, amide, peptide and isopeptide bonds formed by the C-terminal Gly of ubiquitin (a 76-residue protein attached to proteins as an intracellular targeting signal).. Deubiquitinating enzyme that may play a role in the ubiquitin-dependent regulation of protein synthesis, downstream of mTORC1. May associate with the protein synthesis initiation complex and modify its ubiquitination to repress translation. May also repress DNA synthesis and modify different cellular targets thereby regulating cell growth and proliferation. May also play a role in proteasome assembly and function. Functionally, stimulates protein synthesis. Influences the expression of CCND1/cyclin D1 by promoting its translation and regulates MYC/c-Myc protein stability. The protein is Deubiquitinase OTUD6B of Homo sapiens (Human).